The chain runs to 408 residues: tRNA(Ile)-lysidine synthase (408 aa).

Position 27–32 (27–32 (SGGGDS)) interacts with ATP.

It belongs to the tRNA(Ile)-lysidine synthase family.

It localises to the cytoplasm. It carries out the reaction cytidine(34) in tRNA(Ile2) + L-lysine + ATP = lysidine(34) in tRNA(Ile2) + AMP + diphosphate + H(+). Functionally, ligates lysine onto the cytidine present at position 34 of the AUA codon-specific tRNA(Ile) that contains the anticodon CAU, in an ATP-dependent manner. Cytidine is converted to lysidine, thus changing the amino acid specificity of the tRNA from methionine to isoleucine. In Caulobacter vibrioides (strain ATCC 19089 / CIP 103742 / CB 15) (Caulobacter crescentus), this protein is tRNA(Ile)-lysidine synthase.